The chain runs to 320 residues: Cytochrome c biogenesis protein CcsA (320 aa).

Transmembrane regions (helical) follow at residues 15–35, 43–63, 71–91, 98–118, 143–163, 224–244, 251–271, and 285–305; these read FSIV…DEII, KGMI…WIYS, LYES…VPYF, LSTI…SGLL, MILS…LLVI, VISL…VWAN, WNWD…AIYL, and AIVA…VNLL.

This sequence belongs to the CcmF/CycK/Ccl1/NrfE/CcsA family. In terms of assembly, may interact with Ccs1.

The protein resides in the plastid. It localises to the chloroplast thylakoid membrane. Its function is as follows. Required during biogenesis of c-type cytochromes (cytochrome c6 and cytochrome f) at the step of heme attachment. The chain is Cytochrome c biogenesis protein CcsA from Panax ginseng (Korean ginseng).